The sequence spans 548 residues: Chaperonin GroEL (548 aa).

ATP contacts are provided by residues 30–33, lysine 51, 87–91, glycine 415, 479–481, and aspartate 495; these read TLGP, DGTTT, and NAA.

This sequence belongs to the chaperonin (HSP60) family. Forms a cylinder of 14 subunits composed of two heptameric rings stacked back-to-back. Interacts with the co-chaperonin GroES.

It is found in the cytoplasm. The catalysed reaction is ATP + H2O + a folded polypeptide = ADP + phosphate + an unfolded polypeptide.. Functionally, together with its co-chaperonin GroES, plays an essential role in assisting protein folding. The GroEL-GroES system forms a nano-cage that allows encapsulation of the non-native substrate proteins and provides a physical environment optimized to promote and accelerate protein folding. The protein is Chaperonin GroEL of Proteus mirabilis (strain HI4320).